A 207-amino-acid polypeptide reads, in one-letter code: Holliday junction branch migration complex subunit RuvA (207 aa).

The domain I stretch occupies residues 1-64 (MIGLINGQVQ…EDAQLLYGFI (64 aa)). Residues 65 to 143 (DRKERDVFRQ…NIEVDSSHLE (79 aa)) are domain II. The tract at residues 144–152 (FAMQPAPIS) is flexible linker. A domain III region spans residues 153 to 207 (AEGSIIAEVEGALISLGYKEREAQQAIKAAKSNGETFADTQSLLKATLQQFQSFK).

The protein belongs to the RuvA family. Homotetramer. Forms an RuvA(8)-RuvB(12)-Holliday junction (HJ) complex. HJ DNA is sandwiched between 2 RuvA tetramers; dsDNA enters through RuvA and exits via RuvB. An RuvB hexamer assembles on each DNA strand where it exits the tetramer. Each RuvB hexamer is contacted by two RuvA subunits (via domain III) on 2 adjacent RuvB subunits; this complex drives branch migration. In the full resolvosome a probable DNA-RuvA(4)-RuvB(12)-RuvC(2) complex forms which resolves the HJ.

It is found in the cytoplasm. In terms of biological role, the RuvA-RuvB-RuvC complex processes Holliday junction (HJ) DNA during genetic recombination and DNA repair, while the RuvA-RuvB complex plays an important role in the rescue of blocked DNA replication forks via replication fork reversal (RFR). RuvA specifically binds to HJ cruciform DNA, conferring on it an open structure. The RuvB hexamer acts as an ATP-dependent pump, pulling dsDNA into and through the RuvAB complex. HJ branch migration allows RuvC to scan DNA until it finds its consensus sequence, where it cleaves and resolves the cruciform DNA. The chain is Holliday junction branch migration complex subunit RuvA from Psychrobacter cryohalolentis (strain ATCC BAA-1226 / DSM 17306 / VKM B-2378 / K5).